We begin with the raw amino-acid sequence, 574 residues long: Septation ring formation regulator EzrA (574 aa).

The Extracellular segment spans residues 1-7; it reads MSSGIIL. Residues 8–26 traverse the membrane as a helical segment; it reads LIVAIVLLVIIAYLVGVII. Residues 27-574 lie on the Cytoplasmic side of the membrane; sequence RKRNDSLITS…YEKTREHIRF (548 aa). 3 coiled-coil regions span residues 102 to 141, 274 to 350, and 459 to 520; these read NFIR…EEKN, ELVT…ETES, and QLEA…SFEA.

It belongs to the EzrA family.

It is found in the cell membrane. Its function is as follows. Negative regulator of FtsZ ring formation; modulates the frequency and position of FtsZ ring formation. Inhibits FtsZ ring formation at polar sites. Interacts either with FtsZ or with one of its binding partners to promote depolymerization. This is Septation ring formation regulator EzrA from Streptococcus pyogenes serotype M4 (strain MGAS10750).